A 355-amino-acid polypeptide reads, in one-letter code: Mannonate dehydratase (355 aa).

It belongs to the mannonate dehydratase family. Fe(2+) is required as a cofactor. It depends on Mn(2+) as a cofactor.

The enzyme catalyses D-mannonate = 2-dehydro-3-deoxy-D-gluconate + H2O. Its pathway is carbohydrate metabolism; pentose and glucuronate interconversion. Functionally, catalyzes the dehydration of D-mannonate. The polypeptide is Mannonate dehydratase (Brachyspira hyodysenteriae (strain ATCC 49526 / WA1)).